The sequence spans 76 residues: MSYQQQQCKQPCQPPPVCPPKKCPEPCPPPQCPEPCPPPKCPEPCPESCPPPSYQQKCPPVQPPPPCQQKCPPKSK.

3 consecutive repeat copies span residues 21–29 (KKCPEPCPP), 30–38 (PQCPEPCPP), and 39–47 (PKCPEPCPE). Positions 21 to 47 (KKCPEPCPPPQCPEPCPPPKCPEPCPE) are 3 X 9 AA approximate tandem repeats. A compositionally biased stretch (pro residues) spans 40 to 53 (KCPEPCPESCPPPS). Positions 40–76 (KCPEPCPESCPPPSYQQKCPPVQPPPPCQQKCPPKSK) are disordered.

It belongs to the cornifin (SPRR) family. As to expression, not expressed in uterus.

Its subcellular location is the cytoplasm. In terms of biological role, cross-linked envelope protein of keratinocytes. It is a keratinocyte protein that first appears in the cell cytosol, but ultimately becomes cross-linked to membrane proteins by transglutaminase. All that results in the formation of an insoluble envelope beneath the plasma membrane. This Mus musculus (Mouse) protein is Small proline-rich protein 2I (Sprr2i).